The primary structure comprises 490 residues: AP-5 complex subunit mu-1 (490 aa).

Positions 206-476 constitute an MHD domain; sequence KPQVSISITE…LISSDYYIWN (271 aa).

Belongs to the adaptor complexes medium subunit family. In terms of assembly, probably part of the adaptor protein complex 5 (AP-5) a tetramer composed of AP5B1, AP5M1, AP5S1 and AP5Z1.

The protein localises to the cytoplasm. The protein resides in the cytosol. Its subcellular location is the late endosome membrane. It is found in the lysosome membrane. In terms of biological role, as part of AP-5, a probable fifth adaptor protein complex it may be involved in endosomal transport. The polypeptide is AP-5 complex subunit mu-1 (AP5M1) (Macaca fascicularis (Crab-eating macaque)).